We begin with the raw amino-acid sequence, 428 residues long: Serine--tRNA ligase (428 aa).

Residue 235 to 237 (TAE) coordinates L-serine. 266 to 268 (RSE) contributes to the ATP binding site. L-serine is bound at residue Glu-289. Residue 353–356 (EISS) participates in ATP binding. Residue Ser-389 coordinates L-serine.

This sequence belongs to the class-II aminoacyl-tRNA synthetase family. Type-1 seryl-tRNA synthetase subfamily. As to quaternary structure, homodimer. The tRNA molecule binds across the dimer.

It is found in the cytoplasm. The catalysed reaction is tRNA(Ser) + L-serine + ATP = L-seryl-tRNA(Ser) + AMP + diphosphate + H(+). The enzyme catalyses tRNA(Sec) + L-serine + ATP = L-seryl-tRNA(Sec) + AMP + diphosphate + H(+). The protein operates within aminoacyl-tRNA biosynthesis; selenocysteinyl-tRNA(Sec) biosynthesis; L-seryl-tRNA(Sec) from L-serine and tRNA(Sec): step 1/1. Its function is as follows. Catalyzes the attachment of serine to tRNA(Ser). Is also able to aminoacylate tRNA(Sec) with serine, to form the misacylated tRNA L-seryl-tRNA(Sec), which will be further converted into selenocysteinyl-tRNA(Sec). The protein is Serine--tRNA ligase of Shewanella sp. (strain ANA-3).